A 983-amino-acid polypeptide reads, in one-letter code: Nuclear factor NF-kappa-B p105 subunit (983 aa).

Residues 47–372 (PYLQIIEQPK…EVQRKRQKLM (326 aa)) form the RHD domain. Position 66 is an S-nitrosocysteine (cysteine 66). A Phosphoserine; by PKA modification is found at serine 342. A Nuclear localization signal motif is present at residues 365–370 (QRKRQK). The interval 377–397 (DGYGGGSGAGGGGMFGGGGGG) is GRR. Positions 423 to 454 (KSNAGMKHELSNSTVKKDEESSDKQSDKWDTK) are disordered. Positions 428-454 (MKHELSNSTVKKDEESSDKQSDKWDTK) are enriched in basic and acidic residues. ANK repeat units lie at residues 540–569 (NGDN…DMNY), 579–608 (LYQT…NVNL), 612–641 (HGNS…ASSM), 648–677 (EGLS…DVNA), 682–712 (SGRT…DVDS), 716–745 (DGTT…DPHV), and 769–799 (PGTT…AVSE). One can recognise a Death domain in the interval 804-891 (QGPLRELNES…EAIEVIQKAL (88 aa)). Serine 938 is modified (phosphoserine).

As to quaternary structure, active NF-kappa-B is a heterodimer of an about 50 kDa DNA-binding subunit and the weak DNA-binding subunit p65. Two heterodimers might form a labile tetramer. In terms of processing, generation of the NF-kappa-B p50 (Nuclear factor NF-kappa-B p50 subunit) transcription factor takes place both cotranslationally and post-translationally via non-mutually exclusive mechanisms. A cotranslational processing allows the production of both p50 and p105 (Nuclear factor NF-kappa-B p105 subunit) from a single NFKB1 mRNA. While translation occurs, the particular unfolded structure after the GRR repeat region acts as a substrate for the proteasome, promoting degradation of the C-terminus. The GRR acts as a proteasomal 'stop signal', protecting the region upstream of the GRR from degradation and promoting generation of p50. It is unclear if limited proteasome degradation during cotranslational processing depends on ubiquitination. NF-kappa-B p50 is also generated post-translationally following ubiquitination by the KPC complex, leading to limited processing by the proteasome downstream of the GRR region, thereby generating p50. Phosphorylation at the C-terminus by IKBKB/IKKB acts as a signal for ubiquitination and promotes either complete degradation or processing to generate the NF-kappa-B p50 (Nuclear factor NF-kappa-B p50 subunit). Phosphorylation at Ser-938 are required for BTRC/BTRCP-mediated ubiquitination and proteolysis. Phosphorylation at Ser-938 is also required for ubiquitination by the KPC complex and limited processing to generate NF-kappa-B p50 (Nuclear factor NF-kappa-B p50 subunit). Post-translationally, polyubiquitinated at multiple Lys residues in the C-terminus. Polyubiquitinated by the SCF(FBXW11) and SCF(BTRC) complexes following phosphorylation at Ser-938, leading to its complete degradation. In contrast, polyubiquitination by the KPC complex following phosphorylation at Ser-938 leads to limited proteosomal processing and generation of the active NF-kappa-B p50 (Nuclear factor NF-kappa-B p50 subunit). In terms of processing, S-nitrosylation of Cys-66 affects DNA binding. The covalent modification of cysteine by 15-deoxy-Delta12,14-prostaglandin-J2 is autocatalytic and reversible. It may occur as an alternative to other cysteine modifications, such as S-nitrosylation and S-palmitoylation.

It is found in the cytoplasm. Its subcellular location is the nucleus. Functionally, P105 is the precursor of the active p50 subunit (Nuclear factor NF-kappa-B p50 subunit) of the nuclear factor NF-kappa-B. The precursor protein itself does not bind to DNA. Acts as a cytoplasmic retention of attached NF-kappa-B proteins by p105. Constitutes the active form, which associates with RELA/p65 to form the NF-kappa-B p65-p50 complex to form a transcription factor. Together with RELA/p65, binds to the kappa-B consensus sequence 5'-GGRNNYYCC-3', located in the enhancer region of genes involved in immune response and acute phase reactions. This chain is Nuclear factor NF-kappa-B p105 subunit (NFKB1), found in Gallus gallus (Chicken).